We begin with the raw amino-acid sequence, 1423 residues long: DNA-directed RNA polymerase, mitochondrial (1423 aa).

A mitochondrion-targeting transit peptide spans Met-1–Leu-73. The disordered stretch occupies residues Asn-266–Gln-303. Residues Gln-278–Gln-297 show a composition bias toward low complexity. Catalysis depends on residues Asp-901 and Lys-970. A compositionally biased stretch (basic and acidic residues) spans Glu-1055–His-1064. The tract at residues Glu-1055 to Lys-1087 is disordered. Asp-1180 is a catalytic residue. The segment at Val-1316–His-1342 is disordered. Over residues Met-1322–Glu-1336 the composition is skewed to acidic residues.

Belongs to the phage and mitochondrial RNA polymerase family.

It is found in the mitochondrion. The catalysed reaction is RNA(n) + a ribonucleoside 5'-triphosphate = RNA(n+1) + diphosphate. DNA-dependent RNA polymerase catalyzes the transcription of DNA into RNA using the four ribonucleoside triphosphates as substrates. The protein is DNA-directed RNA polymerase, mitochondrial (cyt-5) of Neurospora crassa (strain ATCC 24698 / 74-OR23-1A / CBS 708.71 / DSM 1257 / FGSC 987).